A 239-amino-acid polypeptide reads, in one-letter code: Uridylate kinase (239 aa).

An ATP-binding site is contributed by 13–16; sequence KVSG. A UMP-binding site is contributed by glycine 55. Residues glycine 56 and arginine 60 each coordinate ATP. UMP contacts are provided by residues aspartate 75 and 136–143; that span reads TGNPFFTT. Residues threonine 163, glutamine 164, tyrosine 169, and aspartate 172 each coordinate ATP.

The protein belongs to the UMP kinase family. As to quaternary structure, homohexamer.

It is found in the cytoplasm. The enzyme catalyses UMP + ATP = UDP + ADP. It participates in pyrimidine metabolism; CTP biosynthesis via de novo pathway; UDP from UMP (UMPK route): step 1/1. Inhibited by UTP. Catalyzes the reversible phosphorylation of UMP to UDP. This chain is Uridylate kinase, found in Bartonella quintana (strain Toulouse) (Rochalimaea quintana).